The following is a 239-amino-acid chain: Exosome complex exonuclease RRP46 homolog (239 aa).

Met1 carries the post-translational modification N-acetylmethionine.

It belongs to the RNase PH family. In terms of assembly, probable component of the RNA exosome complex.

It is found in the nucleus. Its subcellular location is the nucleolus. Probable component of the exosome 3'-&gt;5' exoribonuclease complex, a complex that degrades inherently unstable mRNAs containing AU-rich elements (AREs) within their 3'-untranslated regions. This Arabidopsis thaliana (Mouse-ear cress) protein is Exosome complex exonuclease RRP46 homolog.